A 485-amino-acid polypeptide reads, in one-letter code: Inosine-5'-monophosphate dehydrogenase (485 aa).

CBS domains follow at residues 97–154 and 155–211; these read IIRD…VSDV and MVRD…PDAS. NAD(+) contacts are provided by residues D246 and 295–297; that span reads GIG. K(+) is bound by residues G297 and G299. Residue S300 coordinates IMP. Residue C302 coordinates K(+). C302 acts as the Thioimidate intermediate in catalysis. IMP is bound by residues 335–337, 358–359, and 382–386; these read DGG, GS, and YRGMG. The active-site Proton acceptor is the R398. An IMP-binding site is contributed by E409. K(+) contacts are provided by E463, S464, and H465.

The protein belongs to the IMPDH/GMPR family. Homotetramer. K(+) is required as a cofactor.

It carries out the reaction IMP + NAD(+) + H2O = XMP + NADH + H(+). It functions in the pathway purine metabolism; XMP biosynthesis via de novo pathway; XMP from IMP: step 1/1. Its activity is regulated as follows. Mycophenolic acid (MPA) is a non-competitive inhibitor that prevents formation of the closed enzyme conformation by binding to the same site as the amobile flap. In contrast, mizoribine monophosphate (MZP) is a competitive inhibitor that induces the closed conformation. MPA is a potent inhibitor of mammalian IMPDHs but a poor inhibitor of the bacterial enzymes. MZP is a more potent inhibitor of bacterial IMPDH. Catalyzes the conversion of inosine 5'-phosphate (IMP) to xanthosine 5'-phosphate (XMP), the first committed and rate-limiting step in the de novo synthesis of guanine nucleotides, and therefore plays an important role in the regulation of cell growth. The sequence is that of Inosine-5'-monophosphate dehydrogenase from Thermoplasma acidophilum (strain ATCC 25905 / DSM 1728 / JCM 9062 / NBRC 15155 / AMRC-C165).